The following is a 943-amino-acid chain: Tyrosine-protein kinase transmembrane receptor ROR2 (943 aa).

An N-terminal signal peptide occupies residues M1–G33. At E34 to G403 the chain is on the extracellular side. The region spanning P55 to T145 is the Ig-like C2-type domain. The N-linked (GlcNAc...) asparagine glycan is linked to N70. 9 disulfide bridges follow: C83/C135, C174/C239, C182/C232, C223/C264, C252/C300, C256/C286, C316/C394, C337/C377, and C365/C389. An FZ domain is found at H169 to I303. An N-linked (GlcNAc...) asparagine glycan is attached at N188. A Kringle domain is found at C316–C394. A glycan (N-linked (GlcNAc...) asparagine) is linked at N318. The chain crosses the membrane as a helical span at residues I404–L424. At V425–A943 the chain is on the cytoplasmic side. Sulfoserine; partial is present on residues S469 and S471. A Protein kinase domain is found at V473 to L746. Residues L479–V487 and K507 contribute to the ATP site. D615 functions as the Proton acceptor in the catalytic mechanism. At Y646 the chain carries Phosphotyrosine; by autocatalysis. 2 disordered regions span residues S757–F796 and Q850–T931. Composition is skewed to low complexity over residues S765 to Q791 and P857 to G872. R785 is subject to Asymmetric dimethylarginine. A compositionally biased stretch (polar residues) spans Y873–M883.

Belongs to the protein kinase superfamily. Tyr protein kinase family. ROR subfamily. Homodimer; promotes osteogenesis. Binds YWHAB. Interacts with WTIP. Interacts with ROR2. The cofactor is Mg(2+).

Its subcellular location is the cell membrane. It carries out the reaction L-tyrosyl-[protein] + ATP = O-phospho-L-tyrosyl-[protein] + ADP + H(+). Its function is as follows. Tyrosine-protein kinase receptor which may be involved in the early formation of the chondrocytes. It seems to be required for cartilage and growth plate development. Phosphorylates YWHAB, leading to induction of osteogenesis and bone formation. In contrast, has also been shown to have very little tyrosine kinase activity in vitro. May act as a receptor for wnt ligand WNT5A which may result in the inhibition of WNT3A-mediated signaling. The chain is Tyrosine-protein kinase transmembrane receptor ROR2 (ROR2) from Homo sapiens (Human).